Here is a 177-residue protein sequence, read N- to C-terminus: Large ribosomal subunit protein uL6 (177 aa).

The interval 151-177 (LRPPEPYKGKGVRYAGENVRRKEGKKK) is disordered.

The protein belongs to the universal ribosomal protein uL6 family. In terms of assembly, part of the 50S ribosomal subunit.

This protein binds to the 23S rRNA, and is important in its secondary structure. It is located near the subunit interface in the base of the L7/L12 stalk, and near the tRNA binding site of the peptidyltransferase center. This Phenylobacterium zucineum (strain HLK1) protein is Large ribosomal subunit protein uL6.